Consider the following 346-residue polypeptide: S-adenosylmethionine:tRNA ribosyltransferase-isomerase (346 aa).

Belongs to the QueA family. Monomer.

Its subcellular location is the cytoplasm. The catalysed reaction is 7-aminomethyl-7-carbaguanosine(34) in tRNA + S-adenosyl-L-methionine = epoxyqueuosine(34) in tRNA + adenine + L-methionine + 2 H(+). The protein operates within tRNA modification; tRNA-queuosine biosynthesis. Functionally, transfers and isomerizes the ribose moiety from AdoMet to the 7-aminomethyl group of 7-deazaguanine (preQ1-tRNA) to give epoxyqueuosine (oQ-tRNA). This Neisseria meningitidis serogroup C (strain 053442) protein is S-adenosylmethionine:tRNA ribosyltransferase-isomerase.